The chain runs to 148 residues: Deoxyuridine 5'-triphosphate nucleotidohydrolase (148 aa).

Residues arginine 68–glycine 70, asparagine 81, threonine 85–aspartate 87, and lysine 95 contribute to the substrate site.

This sequence belongs to the dUTPase family. The cofactor is Mg(2+).

The catalysed reaction is dUTP + H2O = dUMP + diphosphate + H(+). It functions in the pathway pyrimidine metabolism; dUMP biosynthesis; dUMP from dCTP (dUTP route): step 2/2. This enzyme is involved in nucleotide metabolism: it produces dUMP, the immediate precursor of thymidine nucleotides and it decreases the intracellular concentration of dUTP so that uracil cannot be incorporated into DNA. The protein is Deoxyuridine 5'-triphosphate nucleotidohydrolase of Rickettsia typhi (strain ATCC VR-144 / Wilmington).